The primary structure comprises 447 residues: Na(+)-translocating NADH-quinone reductase subunit A (447 aa).

It belongs to the NqrA family. Composed of six subunits; NqrA, NqrB, NqrC, NqrD, NqrE and NqrF.

It catalyses the reaction a ubiquinone + n Na(+)(in) + NADH + H(+) = a ubiquinol + n Na(+)(out) + NAD(+). In terms of biological role, NQR complex catalyzes the reduction of ubiquinone-1 to ubiquinol by two successive reactions, coupled with the transport of Na(+) ions from the cytoplasm to the periplasm. NqrA to NqrE are probably involved in the second step, the conversion of ubisemiquinone to ubiquinol. This is Na(+)-translocating NADH-quinone reductase subunit A from Haemophilus influenzae (strain 86-028NP).